Here is a 333-residue protein sequence, read N- to C-terminus: Bifunctional phosphoglucose/phosphomannose isomerase (333 aa).

An SIS domain is found at Leu-22 to Ala-160. The D-fructose 6-phosphate site is built by Gly-39, Ser-40, Ser-84, Ser-86, Thr-89, and Arg-136. Glu-211 serves as the catalytic Proton acceptor. Residues His-227 and Lys-322 each coordinate D-fructose 6-phosphate. His-227 functions as the Proton donor in the catalytic mechanism. Residue Lys-322 is the Proton acceptor of the active site.

Belongs to the PGI/PMI family. In terms of assembly, homodimer.

The catalysed reaction is alpha-D-glucose 6-phosphate = beta-D-fructose 6-phosphate. It carries out the reaction D-mannose 6-phosphate = D-fructose 6-phosphate. Inhibited by low concentrations of erythrose 4-phosphate and 6-phosphogluconate. Its function is as follows. Dual specificity isomerase that catalyzes the isomerization of both glucose-6-phosphate and mannose-6-phosphate to fructose-6-phosphate with similar catalytic efficiency. The sequence is that of Bifunctional phosphoglucose/phosphomannose isomerase from Aeropyrum pernix (strain ATCC 700893 / DSM 11879 / JCM 9820 / NBRC 100138 / K1).